The following is a 154-amino-acid chain: MGLSDGEWQLVLNVWGKVEADVAGHGQEVLIRLFKGHPETLEKFDKFKHLKTEDEMKASEDLKKHGNTVLSALGGILKKKGQHEAEIKPLAQSHATKHKIPVKYLEFISEAIIQVLQSKHPGDFGADAQAAMSKALELFRNDIAAKYKELGFQG.

Residues 2–148 form the Globin domain; the sequence is GLSDGEWQLV…FRNDIAAKYK (147 aa). Serine 4 is subject to Phosphoserine. A nitrite-binding site is contributed by histidine 65. Residue histidine 65 coordinates O2. Threonine 68 carries the post-translational modification Phosphothreonine. Histidine 94 contributes to the heme b binding site.

It belongs to the globin family. Monomeric.

The protein resides in the cytoplasm. It is found in the sarcoplasm. It catalyses the reaction Fe(III)-heme b-[protein] + nitric oxide + H2O = Fe(II)-heme b-[protein] + nitrite + 2 H(+). The catalysed reaction is H2O2 + AH2 = A + 2 H2O. Its function is as follows. Monomeric heme protein which primary function is to store oxygen and facilitate its diffusion within muscle tissues. Reversibly binds oxygen through a pentacoordinated heme iron and enables its timely and efficient release as needed during periods of heightened demand. Depending on the oxidative conditions of tissues and cells, and in addition to its ability to bind oxygen, it also has a nitrite reductase activity whereby it regulates the production of bioactive nitric oxide. Under stress conditions, like hypoxia and anoxia, it also protects cells against reactive oxygen species thanks to its pseudoperoxidase activity. This is Myoglobin (MB) from Tupaia glis (Common tree shrew).